Reading from the N-terminus, the 1488-residue chain is Indigoidine synthase (1488 aa).

Residues lysine 229–leucine 585 form an adenylation region. The 76-residue stretch at alanine 1137–arginine 1212 folds into the Carrier domain. An O-(pantetheine 4'-phosphoryl)serine modification is found at serine 1172. A thioesterase region spans residues proline 1230 to alanine 1346.

This sequence belongs to the ATP-dependent AMP-binding enzyme family. The cofactor is pantetheine 4'-phosphate.

The catalysed reaction is 2 FMN + 2 L-glutamine + 2 ATP + O2 = indigoidine + 2 FMNH2 + 2 AMP + 2 diphosphate + 2 H2O. It carries out the reaction FMN + L-glutamine + ATP = 3-amino-1,5-dihydropyridine-2,6-dione + FMNH2 + AMP + diphosphate. It catalyses the reaction 2 3-amino-1,5-dihydropyridine-2,6-dione + O2 = indigoidine + 2 H2O. It functions in the pathway pigment biosynthesis. Nonribosomal peptide synthetase involved in the biosynthesis of the blue pigment indigoidine, which is implicated in pathogenicity and protection from oxidative stress. Catalyzes the synthesis of the blue pigment using L-Gln as a substrate. Two glutamine molecules are cyclized and oxidized to form indigoidine. The chain is Indigoidine synthase from Dickeya dadantii (strain 3937) (Erwinia chrysanthemi (strain 3937)).